A 555-amino-acid polypeptide reads, in one-letter code: Glutamine--tRNA ligase (555 aa).

A 'HIGH' region motif is present at residues 34–44; that stretch reads PEPNGYLHIGH. ATP contacts are provided by residues 35 to 37 and 41 to 47; these read EPN and HIGHAKS. The L-glutamine site is built by aspartate 67 and tyrosine 212. ATP contacts are provided by residues threonine 231, 261-262, and 269-271; these read RL and MSK. The 'KMSKS' region signature appears at 268 to 272; that stretch reads VMSKR. The interaction with tRNA stretch occupies residues 317–324; it reads TKQDNTIE.

It belongs to the class-I aminoacyl-tRNA synthetase family. Monomer.

The protein localises to the cytoplasm. The catalysed reaction is tRNA(Gln) + L-glutamine + ATP = L-glutaminyl-tRNA(Gln) + AMP + diphosphate. This chain is Glutamine--tRNA ligase, found in Salmonella agona (strain SL483).